Consider the following 371-residue polypeptide: MAAKTKKAIVDSKKQFDAIKKQFETFQILNEKGEVVNEAAMPDLTDDQLKELMRRMVFTRVLDQRSISLNRQGRLGFYAPTAGQEASQIATHFALEKEDFVLPGYRDVPQLIWHGLPLYQAFLFSRGHFRGNQMPDDVNALSPQIIIGAQYIQTAGVALGLKKRGKKAVAITYTGDGGASQGDFYEGINFAGAYKAPAIFVVQNNRYAISTPVEKQSAAETIAQKAVAAGIVGVQVDGMDPLAVYAATAEARERAINGEGPTLIETLTFRYGPHTMAGDDPTKYRTKEIENEWEQKDPLVRFRAFLENKGLWSEEEEAKVIEDAKEEIKQAIKKADAEPKQKVTDLMKIMYEKMPHNLEEQFEIYTQKESK.

As to quaternary structure, heterodimer of an alpha and a beta chain. Thiamine diphosphate is required as a cofactor.

It catalyses the reaction N(6)-[(R)-lipoyl]-L-lysyl-[protein] + pyruvate + H(+) = N(6)-[(R)-S(8)-acetyldihydrolipoyl]-L-lysyl-[protein] + CO2. Activity of the E1 module is inhibited by the pyruvate dehydrogenase inhibitor PdhI. In terms of biological role, the pyruvate dehydrogenase complex catalyzes the overall conversion of pyruvate to acetyl-CoA and CO(2). It contains multiple copies of three enzymatic components: pyruvate dehydrogenase (E1), dihydrolipoamide acetyltransferase (E2) and lipoamide dehydrogenase (E3). Its function is as follows. The B.subtilis PDH complex also possesses branched-chain 2-oxoacid dehydrogenase (BCDH) activity. This is Pyruvate dehydrogenase E1 component subunit alpha from Bacillus subtilis (strain 168).